The primary structure comprises 234 residues: Enolase-phosphatase E1 (234 aa).

Positions 13 and 15 each coordinate Mg(2+). Residues 127 to 128 and lysine 164 contribute to the substrate site; that span reads SS. Aspartate 191 is a binding site for Mg(2+).

This sequence belongs to the HAD-like hydrolase superfamily. MasA/MtnC family. In terms of assembly, monomer. Mg(2+) serves as cofactor.

Its subcellular location is the cytoplasm. The protein resides in the nucleus. It catalyses the reaction 5-methylsulfanyl-2,3-dioxopentyl phosphate + H2O = 1,2-dihydroxy-5-(methylsulfanyl)pent-1-en-3-one + phosphate. The protein operates within amino-acid biosynthesis; L-methionine biosynthesis via salvage pathway; L-methionine from S-methyl-5-thio-alpha-D-ribose 1-phosphate: step 3/6. It participates in amino-acid biosynthesis; L-methionine biosynthesis via salvage pathway; L-methionine from S-methyl-5-thio-alpha-D-ribose 1-phosphate: step 4/6. Bifunctional enzyme that catalyzes the enolization of 2,3-diketo-5-methylthiopentyl-1-phosphate (DK-MTP-1-P) into the intermediate 2-hydroxy-3-keto-5-methylthiopentenyl-1-phosphate (HK-MTPenyl-1-P), which is then dephosphorylated to form the acireductone 1,2-dihydroxy-3-keto-5-methylthiopentene (DHK-MTPene). The chain is Enolase-phosphatase E1 from Podospora anserina (strain S / ATCC MYA-4624 / DSM 980 / FGSC 10383) (Pleurage anserina).